The primary structure comprises 271 residues: Thermoregulatory protein LcrF (271 aa).

The 99-residue stretch at 167 to 265 folds into the HTH araC/xylS-type domain; the sequence is ERLQKFMEEN…GCTPSQARLT (99 aa). 2 DNA-binding regions (H-T-H motif) span residues 184-205 and 232-255; these read SKFA…GTVY and IVDI…RRRF.

Its function is as follows. Transcriptional activator of the thermally regulated virulent yopE gene. LcrF activity could be modulated by the interaction with an inducer molecule serving as a temperature messenger. The availability of the messenger would in turn be controlled by a temperature-responsive process serving as a cellular thermometer. This is Thermoregulatory protein LcrF (lcrF) from Yersinia pestis.